A 1828-amino-acid chain; its full sequence is Protein TIC 214 (1828 aa).

6 consecutive transmembrane segments (helical) span residues 18–38 (IINS…FSIG), 64–84 (FITG…HLAM), 87–107 (PYTI…WKNH), 124–144 (FSIQ…HFVL), 172–192 (VGWL…LFWI), and 222–242 (VNIF…SPIL). Residues 270–279 (SEAKETKQEQ) show a composition bias toward basic and acidic residues. Disordered regions lie at residues 270 to 301 (SEAK…PNKL), 618 to 637 (DLQQ…HAIR), 741 to 763 (EFKT…EDKK), and 1533 to 1571 (KEEF…RQSK). The segment covering 1550–1562 (KDVEKDYAKSDIK) has biased composition (basic and acidic residues).

This sequence belongs to the TIC214 family. As to quaternary structure, part of the Tic complex.

It is found in the plastid. The protein localises to the chloroplast inner membrane. Its function is as follows. Involved in protein precursor import into chloroplasts. May be part of an intermediate translocation complex acting as a protein-conducting channel at the inner envelope. This Calycanthus floridus var. glaucus (Eastern sweetshrub) protein is Protein TIC 214.